The sequence spans 179 residues: Isopentenyl-diphosphate Delta-isomerase (179 aa).

Positions 25 and 31 each coordinate Mn(2+). Residues 29-161 (ELHRAITVYI…PEQFTAWFQL (133 aa)) form the Nudix hydrolase domain. C66 is a catalytic residue. Residue C66 participates in Mg(2+) binding. H68 serves as a coordination point for Mn(2+). Residue E86 coordinates Mg(2+). Mn(2+)-binding residues include E111 and E113. Residue E113 is part of the active site.

It belongs to the IPP isomerase type 1 family. In terms of assembly, homodimer. The cofactor is Mg(2+). It depends on Mn(2+) as a cofactor.

The protein resides in the cytoplasm. It catalyses the reaction isopentenyl diphosphate = dimethylallyl diphosphate. Its pathway is isoprenoid biosynthesis; dimethylallyl diphosphate biosynthesis; dimethylallyl diphosphate from isopentenyl diphosphate: step 1/1. Functionally, catalyzes the 1,3-allylic rearrangement of the homoallylic substrate isopentenyl (IPP) to its highly electrophilic allylic isomer, dimethylallyl diphosphate (DMAPP). The sequence is that of Isopentenyl-diphosphate Delta-isomerase from Pectobacterium atrosepticum (strain SCRI 1043 / ATCC BAA-672) (Erwinia carotovora subsp. atroseptica).